The primary structure comprises 163 residues: uncharacterized protein (163 aa).

The interval 30–163 is disordered; sequence GNENTSVSSD…IYKKLGKKKR (134 aa). A compositionally biased stretch (basic and acidic residues) spans 88–118; that stretch reads ERQLQKKKEAEKIEGGKNHDNLKRKLNKVGD. Residues 119 to 133 are compositionally biased toward acidic residues; the sequence is ELNEQQSDTDDDDDD. Position 125 is a phosphoserine (Ser125). Thr127 carries the phosphothreonine modification.

Its subcellular location is the nucleus. The protein resides in the nucleolus. This is an uncharacterized protein from Schizosaccharomyces pombe (strain 972 / ATCC 24843) (Fission yeast).